The sequence spans 312 residues: Malate dehydrogenase (312 aa).

NAD(+) is bound by residues 7-12 (GAGNVG) and Asp-32. Residues Arg-82 and Arg-88 each coordinate substrate. NAD(+) is bound by residues Asn-95 and 118–120 (VSN). Asn-120 and Arg-151 together coordinate substrate. His-175 (proton acceptor) is an active-site residue.

The protein belongs to the LDH/MDH superfamily. MDH type 3 family.

The catalysed reaction is (S)-malate + NAD(+) = oxaloacetate + NADH + H(+). Its function is as follows. Catalyzes the reversible oxidation of malate to oxaloacetate. This chain is Malate dehydrogenase, found in Cytophaga hutchinsonii (strain ATCC 33406 / DSM 1761 / CIP 103989 / NBRC 15051 / NCIMB 9469 / D465).